The sequence spans 446 residues: Probable ribosomal RNA small subunit methyltransferase B (446 aa).

S-adenosyl-L-methionine-binding positions include 260 to 266 (CAAPGGK), Asp-284, Asp-311, and Asp-330. Residue Cys-383 is the Nucleophile of the active site.

It belongs to the class I-like SAM-binding methyltransferase superfamily. RsmB/NOP family.

It is found in the cytoplasm. It catalyses the reaction cytidine(967) in 16S rRNA + S-adenosyl-L-methionine = 5-methylcytidine(967) in 16S rRNA + S-adenosyl-L-homocysteine + H(+). Functionally, specifically methylates the cytosine at position 967 (m5C967) of 16S rRNA. In Synechocystis sp. (strain ATCC 27184 / PCC 6803 / Kazusa), this protein is Probable ribosomal RNA small subunit methyltransferase B.